The chain runs to 2415 residues: Bradyzoite-formation deficient protein 1 (2415 aa).

Disordered regions lie at residues 369 to 392 (WNKPEAARQEYHRASASARGPEET), 418 to 481 (HLTS…PYTR), and 761 to 845 (DGCG…QDTQ). The segment covering 419–429 (LTSRQHPNPRP) has biased composition (basic residues). Residues 430–443 (RMKEEHCGREREVL) show a composition bias toward basic and acidic residues. Composition is skewed to polar residues over residues 444-460 (SSEQPSDCGETQKTPAS) and 832-843 (PRTTSSSSYGQD). A Myb-like domain is found at 921–968 (WSAEEDASLAELVSRKGFKWALISSQLTGAFGIPRTGKQCRERWFNHV). Residues 969–1023 (NPEVKKGDWSAEEDAMILMLQNELGNRWATIAKKLRGRTENAVKNRFISLSNARL) form the HTH myb-type domain. A DNA-binding region (H-T-H motif) is located at residues 996 to 1019 (WATIAKKLRGRTENAVKNRFISLS). Disordered regions lie at residues 1027–1050 (RPKRDGSSADCFSNRRTGSGKSSG), 1098–1127 (VSRPRQCTGTSPSCGHPSAGEGDPSHLKNT), 1206–1270 (NDER…NGLD), 1319–1343 (PACDHRGAPQNSVESGEQSPDAQRQ), 1501–1521 (QLWTSQETESDTNPSPNQQHE), 1905–1932 (VSRDKQREPPKNGLTGCDVPEYLGTSQS), 1959–2013 (RVRW…GSTA), and 2161–2222 (GTDA…EMQD). Residues 1036 to 1050 (DCFSNRRTGSGKSSG) show a composition bias toward polar residues. Positions 1227–1237 (AHEHADIARSD) are enriched in basic and acidic residues. Polar residues-rich tracts occupy residues 1327 to 1343 (PQNSVESGEQSPDAQRQ) and 1501 to 1520 (QLWTSQETESDTNPSPNQQH). The span at 1974–1985 (SVSSGASNSATT) shows a compositional bias: polar residues. Over residues 2181–2197 (QAHRRDGHDMQRVQRCD) the composition is skewed to basic and acidic residues.

It localises to the nucleus. Its function is as follows. Master transcription factor that controls the differentiation of acute-stage tachyzoite parasites into chronic-stage bradyzoites, which form intracellular cysts resistant to immune clearance and existing therapies. Sufficient to drive differentiation into bradyzoite stage. Following translation in response to stress conditions, binds to the promoter of many chronic stage-specific genes and promotes their expression, thereby driving differentiation into bradyzoites. The sequence is that of Bradyzoite-formation deficient protein 1 from Toxoplasma gondii (strain ATCC 50611 / Me49).